A 330-amino-acid chain; its full sequence is Fructose-1,6-bisphosphatase class 1 (330 aa).

Mg(2+) contacts are provided by Glu84, Asp103, Leu105, and Asp106. Substrate contacts are provided by residues Asp106–Ser109, Asn196, and Lys262. Glu268 serves as a coordination point for Mg(2+).

This sequence belongs to the FBPase class 1 family. As to quaternary structure, homotetramer. Requires Mg(2+) as cofactor.

The protein resides in the cytoplasm. It carries out the reaction beta-D-fructose 1,6-bisphosphate + H2O = beta-D-fructose 6-phosphate + phosphate. It participates in carbohydrate biosynthesis; gluconeogenesis. In Shewanella frigidimarina (strain NCIMB 400), this protein is Fructose-1,6-bisphosphatase class 1.